Consider the following 708-residue polypeptide: Leukotoxin translocation ATP-binding protein LktB (708 aa).

Residues 1–126 enclose the Peptidase C39 domain; it reads MEANHQRNDL…ACYQGQLILV (126 aa). Residues 155-437 form the ABC transmembrane type-1 domain; the sequence is FLETLIVSIF…LAQLWQDFQQ (283 aa). 5 helical membrane passes run 159-179, 192-212, 270-290, 296-316, and 389-409; these read LIVS…FQVV, LNII…LSGL, ALTS…MWYY, LVIL…SPIL, and VMVI…LSIG. An ABC transporter domain is found at 469 to 704; sequence ISFKNIRFRY…SNGLYSYLHQ (236 aa). 503-510 provides a ligand contact to ATP; sequence GRSGSGKS.

It belongs to the ABC transporter superfamily. Protein-1 exporter (TC 3.A.1.109) family. In terms of assembly, homodimer.

The protein localises to the cell inner membrane. It carries out the reaction ATP + H2O + proteinSide 1 = ADP + phosphate + proteinSide 2.. Its function is as follows. Part of the ABC transporter complex LktBD involved in leukotoxin export. Transmembrane domains (TMD) form a pore in the inner membrane and the ATP-binding domain (NBD) is responsible for energy generation. The sequence is that of Leukotoxin translocation ATP-binding protein LktB (lktB) from Mannheimia haemolytica (Pasteurella haemolytica).